The following is a 176-amino-acid chain: Acireductone dioxygenase (176 aa).

A disordered region spans residues 1–21 (MKAYWYDNKPGDQREPHDSGR). The span at 9 to 20 (KPGDQREPHDSG) shows a compositional bias: basic and acidic residues. Fe(2+) contacts are provided by His81, His83, Glu87, and His126. Residues His81, His83, Glu87, and His126 each coordinate Ni(2+).

This sequence belongs to the acireductone dioxygenase (ARD) family. Fe(2+) is required as a cofactor. Ni(2+) serves as cofactor.

It localises to the cytoplasm. It is found in the nucleus. The enzyme catalyses 1,2-dihydroxy-5-(methylsulfanyl)pent-1-en-3-one + O2 = 4-methylsulfanyl-2-oxobutanoate + formate + 2 H(+). It carries out the reaction 1,2-dihydroxy-5-(methylsulfanyl)pent-1-en-3-one + O2 = 3-(methylsulfanyl)propanoate + CO + formate + 2 H(+). The protein operates within amino-acid biosynthesis; L-methionine biosynthesis via salvage pathway; L-methionine from S-methyl-5-thio-alpha-D-ribose 1-phosphate: step 5/6. Functionally, catalyzes 2 different reactions between oxygen and the acireductone 1,2-dihydroxy-3-keto-5-methylthiopentene (DHK-MTPene) depending upon the metal bound in the active site. Fe-containing acireductone dioxygenase (Fe-ARD) produces formate and 2-keto-4-methylthiobutyrate (KMTB), the alpha-ketoacid precursor of methionine in the methionine recycle pathway. Ni-containing acireductone dioxygenase (Ni-ARD) produces methylthiopropionate, carbon monoxide and formate, and does not lie on the methionine recycle pathway. This Aspergillus fumigatus (strain ATCC MYA-4609 / CBS 101355 / FGSC A1100 / Af293) (Neosartorya fumigata) protein is Acireductone dioxygenase (adi1).